The chain runs to 498 residues: Glycerol kinase (498 aa).

T12 contributes to the ADP binding site. The ATP site is built by T12, T13, and S14. A sn-glycerol 3-phosphate-binding site is contributed by T12. R16 contacts ADP. Residues R82, E83, Y134, and D243 each coordinate sn-glycerol 3-phosphate. 5 residues coordinate glycerol: R82, E83, Y134, D243, and Q244. ADP is bound by residues T265 and G308. Positions 265, 308, 312, and 409 each coordinate ATP. Residues G409 and N413 each contribute to the ADP site.

The protein belongs to the FGGY kinase family. In terms of assembly, homotetramer and homodimer (in equilibrium).

It catalyses the reaction glycerol + ATP = sn-glycerol 3-phosphate + ADP + H(+). The protein operates within polyol metabolism; glycerol degradation via glycerol kinase pathway; sn-glycerol 3-phosphate from glycerol: step 1/1. With respect to regulation, activated by phosphorylation and inhibited by fructose 1,6-bisphosphate (FBP). Its function is as follows. Key enzyme in the regulation of glycerol uptake and metabolism. Catalyzes the phosphorylation of glycerol to yield sn-glycerol 3-phosphate. The polypeptide is Glycerol kinase (Clostridium botulinum (strain Loch Maree / Type A3)).